A 312-amino-acid chain; its full sequence is 4-hydroxyproline 2-epimerase (312 aa).

Residue cysteine 88 is the Proton acceptor of the active site. Residues 89-90 (GH), histidine 208, and aspartate 234 each bind substrate. Cysteine 238 (proton donor) is an active-site residue. 239 to 240 (GT) is a substrate binding site.

This sequence belongs to the proline racemase family.

The catalysed reaction is trans-4-hydroxy-L-proline = cis-4-hydroxy-D-proline. Functionally, catalyzes the epimerization of trans-4-hydroxy-L-proline (t4LHyp) to cis-4-hydroxy-D-proline (c4DHyp). Is likely involved in a degradation pathway that converts t4LHyp to alpha-ketoglutarate. Can also catalyze the epimerization of trans-3-hydroxy-L-proline (t3LHyp) to cis-3-hydroxy-D-proline (c3DHyp), albeit with 500-fold lower efficiency. Displays no proline racemase activity. The chain is 4-hydroxyproline 2-epimerase from Xanthomonas campestris pv. campestris (strain ATCC 33913 / DSM 3586 / NCPPB 528 / LMG 568 / P 25).